The primary structure comprises 1156 residues: DNA-directed RNA polymerase 133 kDa polypeptide (1156 aa).

The protein belongs to the RNA polymerase beta chain family. In terms of assembly, the DNA-dependent RNA polymerase used for intermediate and late genes expression consists of eight subunits 147 kDa, 133 kDa, 35 kDa, 30 kDa, 22 kDa, 19 kDa, 18 kDa and 7 kDa totalling more than 500 kDa in mass. The same holoenzyme, with the addition of the transcription-specificity factor RAP94, is used for early gene expression.

It is found in the virion. The enzyme catalyses RNA(n) + a ribonucleoside 5'-triphosphate = RNA(n+1) + diphosphate. In terms of biological role, part of the DNA-dependent RNA polymerase which catalyzes the transcription of viral DNA into RNA using the four ribonucleoside triphosphates as substrates. Responsible for the transcription of early, intermediate and late genes. DNA-dependent RNA polymerase associates with the early transcription factor (ETF), itself composed of D6 and A7, thereby allowing the early genes transcription. Late transcription, and probably also intermediate transcription, require newly synthesized RNA polymerase. This chain is DNA-directed RNA polymerase 133 kDa polypeptide (RPO132), found in Homo sapiens (Human).